The sequence spans 258 residues: Regulatory protein RecX (258 aa).

The protein belongs to the RecX family.

The protein localises to the cytoplasm. Its function is as follows. Modulates RecA activity. This chain is Regulatory protein RecX, found in Streptococcus pneumoniae (strain JJA).